Here is a 354-residue protein sequence, read N- to C-terminus: Guanine nucleotide-binding protein G(i) subunit alpha (354 aa).

G2 carries the N-myristoyl glycine lipid modification. Residue C3 is the site of S-palmitoyl cysteine attachment. One can recognise a G-alpha domain in the interval 32–354 (REVKLLLLGA…KNNLKDCGLF (323 aa)). Residues 35 to 48 (KLLLLGAGESGKST) form a G1 motif region. GTP-binding positions include 40 to 47 (GAGESGKS), 175 to 181 (LRTRVKT), 200 to 204 (DVGGQ), 269 to 272 (NKKD), and A326. Mg(2+)-binding residues include S47 and T181. Residues 173 to 181 (DVLRTRVKT) form a G2 motif region. The interval 196-205 (FKMFDVGGQR) is G3 motif. Residues 265–272 (ILFLNKKD) form a G4 motif region. The interval 324 to 329 (TCATDT) is G5 motif.

This sequence belongs to the G-alpha family. G(i/o/t/z) subfamily. As to quaternary structure, g proteins are composed of 3 units; alpha, beta and gamma. The alpha chain contains the guanine nucleotide binding site.

In terms of biological role, guanine nucleotide-binding proteins (G proteins) are involved as modulators or transducers in various transmembrane signaling systems. In Planorbella trivolvis (Marsh rams-horn), this protein is Guanine nucleotide-binding protein G(i) subunit alpha.